Consider the following 381-residue polypeptide: Zinc finger CCCH domain-containing protein 61 (381 aa).

Residues 1–39 are disordered; the sequence is MDVEHHKSGHISRPTVDIPPRKLLSSAKSPSSVSSPLRD. Over residues 21–37 the composition is skewed to low complexity; the sequence is RKLLSSAKSPSSVSSPL. C3H1-type zinc fingers lie at residues 101–128 and 137–159; these read YTGE…HGVF and YRTE…AHSP.

Interacts with MARD1/FLZ9 and RD21A via its CCCH zing finger domains.

The protein resides in the cytoplasm. It localises to the stress granule. Its subcellular location is the P-body. This is Zinc finger CCCH domain-containing protein 61 from Arabidopsis thaliana (Mouse-ear cress).